A 498-amino-acid polypeptide reads, in one-letter code: Probable malate:quinone oxidoreductase (498 aa).

The protein belongs to the MQO family. The cofactor is FAD.

It catalyses the reaction (S)-malate + a quinone = a quinol + oxaloacetate. The protein operates within carbohydrate metabolism; tricarboxylic acid cycle; oxaloacetate from (S)-malate (quinone route): step 1/1. This is Probable malate:quinone oxidoreductase from Granulibacter bethesdensis (strain ATCC BAA-1260 / CGDNIH1).